A 766-amino-acid polypeptide reads, in one-letter code: Single-minded homolog 1 (766 aa).

Positions 1–53 constitute a bHLH domain; sequence MKEKSKNAARTRREKENSEFYELAKLLPLPSAITSQLDKASIIRLTTSYLKMR. PAS domains follow at residues 77-147 and 218-288; these read GREL…QPYH and PPSA…LVKG. Positions 292–335 constitute a PAC domain; that stretch reads TKYYRFLAKHGGWVWVQSYATIVHNSRSSRPHCIVSVNYVLTDT. The region spanning 336–766 is the Single-minded C-terminal domain; that stretch reads EYKGLQLSLD…GTSVIITNGS (431 aa). Over residues 353-365 the composition is skewed to polar residues; it reads AFSYTSSSTPTMT. 2 disordered regions span residues 353-431 and 528-563; these read AFSY…SQHD and WDEDSVVSSPDPGSASESGDRYRTEQYQSSPHEPSK. Positions 368–387 match the Nuclear localization signal motif; it reads RKGAKSRLSSSKSKSRTSPY. Residues 373 to 385 are compositionally biased toward low complexity; it reads SRLSSSKSKSRTS. Basic and acidic residues predominate over residues 394–404; sequence HTERSESDHDS.

As to quaternary structure, efficient DNA binding requires dimerization with another bHLH protein. Heterodimer; forms a heterodimer with ARNT, ARNT2.

The protein localises to the nucleus. Its function is as follows. Transcriptional factor that may have pleiotropic effects during embryogenesis and in the adult. The protein is Single-minded homolog 1 (SIM1) of Pan paniscus (Pygmy chimpanzee).